We begin with the raw amino-acid sequence, 887 residues long: MPILLFLIDTSASMNQRSHLGTTYLDTAKGAVETFMKLRARDPASRGDRYMLVTFEEPPYAIKAGWKENHATFMNELKNLQAEGLTTLGQSLRTAFDLLNLNRLVTGIDNYGQGRNPFFLEPAIIITITDGSKLTTTSGVQDELHLPLNSPLPGSELTKEPFRWDQRLFALVLRLPGTMSVESEQLTGVPLDDSAITPMCEVTGGRSYSVCSPRMLNQCLESLVQKVQSGVVINFEKAGPDPSPVEDGQPDISRPFGSQPWHSCHKLIYVRPNPKTGVPIGHWPVPESFWPDQNSPTLPPRTSHPVVKFSCTDCEPMVIDKLPFDKYELEPSPLTQFILERKSPQTCWQVYVSNSAKYSELGHPFGYLKASTALNCVNLFVMPYNYPVLLPLLDDLFKVHKAKPTLKWRQSFESYLKTMPPYYLGPLKKAVRMMGAPNLIADSMEYGLSYSVISYLKKLSQQAKIESDRVIGSVGKKVVQETGIKVRSRSHGLSMAYRKDFQQLLQGISEDVPHRLLDLNMKEYTGFQVALLNKDLKPQTFRNAYDIPRRNLLDHLTRMRSNLLKSTRRFLKGQDEDQVHSVPIAQMGNYQEYLKQVPSPLRELDPDQPRRLHTFGNPFKLDKKGMMIDEADEFVAGPQNKHKRPGEPNMQGIPKRRRCMSPLLRGRQQNPVVNNHIGGKGPPAPTTQAQPDLIKPLPLHKISETTNDSIIHDVVENHVADQLSSDITPNAMDTEFSASSPASLLERPTNHMEALGHDHLGTNDLTVGGFLENHEEPRDKEQCAEENIPASSLNKGKKLMHCRSHEEVNTELKAQIMKEIRKPGRKYERIFTLLKHVQGSLQTRLIFLQNVIKEASRFKKRMLIEQLENFLDEIHRRANQINHINSN.

The VWFA domain maps to 3–227; it reads ILLFLIDTSA…QCLESLVQKV (225 aa). An Inhibitory loop motif is present at residues 626–633; sequence MMIDEADE. Ser-804 is subject to Phosphoserine.

This sequence belongs to the Integrator subunit 6 family. Component of the Integrator complex, composed of core subunits INTS1, INTS2, INTS3, INTS4, INTS5, INTS6, INTS7, INTS8, INTS9/RC74, INTS10, INTS11/CPSF3L, INTS12, INTS13, INTS14 and INTS15. The core complex associates with protein phosphatase 2A subunits PPP2CA and PPP2R1A, to form the Integrator-PP2A (INTAC) complex. As to expression, widely expressed. Expressed in heart, brain, placenta, lung, liver, skeletal muscle, kidney and pancreas.

The protein resides in the nucleus. The protein localises to the chromosome. Its function is as follows. Component of the integrator complex, a multiprotein complex that terminates RNA polymerase II (Pol II) transcription in the promoter-proximal region of genes. The integrator complex provides a quality checkpoint during transcription elongation by driving premature transcription termination of transcripts that are unfavorably configured for transcriptional elongation: the complex terminates transcription by (1) catalyzing dephosphorylation of the C-terminal domain (CTD) of Pol II subunit POLR2A and SUPT5H/SPT5, (2) degrading the exiting nascent RNA transcript via endonuclease activity and (3) promoting the release of Pol II from bound DNA. The integrator complex is also involved in terminating the synthesis of non-coding Pol II transcripts, such as enhancer RNAs (eRNAs), small nuclear RNAs (snRNAs), telomerase RNAs and long non-coding RNAs (lncRNAs). Within the integrator complex, INTS6 acts as a molecular adapter that promotes assembly of protein phosphatase 2A (PP2A) subunits to the integrator core complex, promoting recruitment of PP2A to transcription pause-release checkpoint. Mediates recruitment of cytoplasmic dynein to the nuclear envelope, probably as component of the integrator complex. May have a tumor suppressor role; an ectopic expression suppressing tumor cell growth. This chain is Integrator complex subunit 6, found in Homo sapiens (Human).